Reading from the N-terminus, the 188-residue chain is Ribosomal RNA small subunit methyltransferase G (188 aa).

Residues glycine 69, phenylalanine 74, 119 to 120 (VQ), and arginine 134 each bind S-adenosyl-L-methionine.

It belongs to the methyltransferase superfamily. RNA methyltransferase RsmG family.

Its subcellular location is the cytoplasm. The catalysed reaction is guanosine(527) in 16S rRNA + S-adenosyl-L-methionine = N(7)-methylguanosine(527) in 16S rRNA + S-adenosyl-L-homocysteine. Its function is as follows. Specifically methylates the N7 position of guanine in position 527 of 16S rRNA. This chain is Ribosomal RNA small subunit methyltransferase G, found in Campylobacter jejuni subsp. jejuni serotype O:23/36 (strain 81-176).